The following is a 399-amino-acid chain: Elongation factor Tu (399 aa).

Residues 10 to 209 enclose the tr-type G domain; sequence KPHVNIGTIG…EVDRYIPTPE (200 aa). The G1 stretch occupies residues 19–26; it reads GHVDHGKT. 19-26 serves as a coordination point for GTP; it reads GHVDHGKT. Mg(2+) is bound at residue threonine 26. Residues 60-64 form a G2 region; that stretch reads GITIA. The tract at residues 81-84 is G3; that stretch reads DCPG. Residues 81–85 and 136–139 each bind GTP; these read DCPGH and NKED. The interval 136–139 is G4; the sequence is NKED. The segment at 174–176 is G5; that stretch reads SAL.

This sequence belongs to the TRAFAC class translation factor GTPase superfamily. Classic translation factor GTPase family. EF-Tu/EF-1A subfamily. Monomer.

The protein resides in the cytoplasm. The catalysed reaction is GTP + H2O = GDP + phosphate + H(+). In terms of biological role, GTP hydrolase that promotes the GTP-dependent binding of aminoacyl-tRNA to the A-site of ribosomes during protein biosynthesis. The sequence is that of Elongation factor Tu from Wolinella succinogenes (strain ATCC 29543 / DSM 1740 / CCUG 13145 / JCM 31913 / LMG 7466 / NCTC 11488 / FDC 602W) (Vibrio succinogenes).